A 90-amino-acid chain; its full sequence is Small ribosomal subunit protein uS17 (90 aa).

This sequence belongs to the universal ribosomal protein uS17 family. As to quaternary structure, part of the 30S ribosomal subunit.

In terms of biological role, one of the primary rRNA binding proteins, it binds specifically to the 5'-end of 16S ribosomal RNA. The sequence is that of Small ribosomal subunit protein uS17 from Methylobacillus flagellatus (strain ATCC 51484 / DSM 6875 / VKM B-1610 / KT).